A 40-amino-acid polypeptide reads, in one-letter code: U12-ctenitoxin-Co1a (40 aa).

4 cysteine pairs are disulfide-bonded: Cys2–Cys16, Cys9–Cys22, Cys15–Cys31, and Cys24–Cys29.

In terms of tissue distribution, expressed by the venom gland.

Its subcellular location is the secreted. Insecticidal neurotoxin that reversibly inhibits the N-methyl-D-aspartate (NMDA)-subtype of ionotropic glutamate receptor (GRIN) and inhibits inactivation of insect sodium channels (Nav). In vivo, is highly toxic to insects. This is U12-ctenitoxin-Co1a from Ctenus ornatus (Brazilian spider).